The following is a 141-amino-acid chain: Small ribosomal subunit protein uS8 (141 aa).

It belongs to the universal ribosomal protein uS8 family. As to quaternary structure, part of the 30S ribosomal subunit. Contacts proteins S5 and S12.

Its function is as follows. One of the primary rRNA binding proteins, it binds directly to 16S rRNA central domain where it helps coordinate assembly of the platform of the 30S subunit. The polypeptide is Small ribosomal subunit protein uS8 (Mycoplasma genitalium (strain ATCC 33530 / DSM 19775 / NCTC 10195 / G37) (Mycoplasmoides genitalium)).